Reading from the N-terminus, the 235-residue chain is Methylosome subunit pICln (235 aa).

A disordered region spans residues 1–21 (MSFLKSFPPPGSAEGLRQQQP). Position 2 is an N-acetylserine (Ser-2). Ser-100, Ser-142, Ser-191, Ser-193, Ser-196, and Ser-208 each carry phosphoserine. The tract at residues 133–157 (LHPDPEDEDSDDYDGEEYDVEAHEQ) is disordered. A compositionally biased stretch (acidic residues) spans 137–151 (PEDEDSDDYDGEEYD). Residues 195–217 (SSQYNMAGVRTEDSTRDYEDGME) are disordered. The segment covering 204-213 (RTEDSTRDYE) has biased composition (basic and acidic residues). At Thr-221 the chain carries Phosphothreonine.

Belongs to the pICln (TC 1.A.47) family. Component of the methylosome, a 20S complex containing at least PRMT5/SKB1, WDR77/MEP50 and CLNS1A/pICln. May mediate SNRPD1 and SNRPD3 methylation. Forms a 6S pICln-Sm complex composed of CLNS1A/pICln, SNRPD1, SNRPD2, SNRPE, SNRPF and SNRPG; ring-like structure where CLNS1A/pICln mimics additional Sm proteins and which is unable to assemble into the core snRNP. Interacts with LSM10 and LSM11.

The protein resides in the cytoplasm. Its subcellular location is the cytosol. It localises to the nucleus. The protein localises to the cytoskeleton. Functionally, involved in both the assembly of spliceosomal snRNPs and the methylation of Sm proteins. Chaperone that regulates the assembly of spliceosomal U1, U2, U4 and U5 small nuclear ribonucleoproteins (snRNPs), the building blocks of the spliceosome, and thereby plays an important role in the splicing of cellular pre-mRNAs. Most spliceosomal snRNPs contain a common set of Sm proteins SNRPB, SNRPD1, SNRPD2, SNRPD3, SNRPE, SNRPF and SNRPG that assemble in a heptameric protein ring on the Sm site of the small nuclear RNA to form the core snRNP (Sm core). In the cytosol, the Sm proteins SNRPD1, SNRPD2, SNRPE, SNRPF and SNRPG are trapped in an inactive 6S pICln-Sm complex by the chaperone CLNS1A that controls the assembly of the core snRNP. Dissociation by the SMN complex of CLNS1A from the trapped Sm proteins and their transfer to an SMN-Sm complex triggers the assembly of core snRNPs and their transport to the nucleus. This is Methylosome subunit pICln (CLNS1A) from Canis lupus familiaris (Dog).